Consider the following 406-residue polypeptide: HEAT repeat-containing taxis protein OE_2401F (406 aa).

HEAT repeat units follow at residues 7-41 (LERS…NLDE), 42-78 (PEPE…VDAL), 90-127 (GATW…EDTA), 153-184 (IEQP…LGRL), 185-215 (TTEQ…LGRF), 216-252 (ETAE…NVPP), and 370-406 (VGGD…GGKT).

As to quaternary structure, interacts with chemotaxis (Che) proteins.

Functionally, involved in taxis signal transduction. Essential for the ability to control the direction of flagellar rotation. May have a role between CheY and the flagellum. The chain is HEAT repeat-containing taxis protein OE_2401F from Halobacterium salinarum (strain ATCC 29341 / DSM 671 / R1).